Here is a 251-residue protein sequence, read N- to C-terminus: ATP synthase subunit a 2 (251 aa).

Transmembrane regions (helical) follow at residues 35 to 55 (GQVF…SLLA), 94 to 114 (LPFI…GSLI), 133 to 153 (INTT…AGLS), 198 to 218 (LVVA…LMAL), and 219 to 239 (GLFT…AYIH).

The protein belongs to the ATPase A chain family. As to quaternary structure, F-type ATPases have 2 components, CF(1) - the catalytic core - and CF(0) - the membrane proton channel. CF(1) has five subunits: alpha(3), beta(3), gamma(1), delta(1), epsilon(1). CF(0) has four main subunits: a, b, b' and c.

It is found in the cellular thylakoid membrane. Functionally, key component of the proton channel; it plays a direct role in the translocation of protons across the membrane. The chain is ATP synthase subunit a 2 from Crocosphaera subtropica (strain ATCC 51142 / BH68) (Cyanothece sp. (strain ATCC 51142)).